The primary structure comprises 250 residues: tRNA (guanine-N(1)-)-methyltransferase (250 aa).

Residues glycine 115 and 135-140 (LGDFVL) contribute to the S-adenosyl-L-methionine site.

It belongs to the RNA methyltransferase TrmD family. Homodimer.

It is found in the cytoplasm. It catalyses the reaction guanosine(37) in tRNA + S-adenosyl-L-methionine = N(1)-methylguanosine(37) in tRNA + S-adenosyl-L-homocysteine + H(+). Specifically methylates guanosine-37 in various tRNAs. This chain is tRNA (guanine-N(1)-)-methyltransferase, found in Legionella pneumophila (strain Paris).